A 91-amino-acid polypeptide reads, in one-letter code: Small ribosomal subunit protein uS15 (91 aa).

Belongs to the universal ribosomal protein uS15 family. Part of the 30S ribosomal subunit. Forms a bridge to the 50S subunit in the 70S ribosome, contacting the 23S rRNA.

Its function is as follows. One of the primary rRNA binding proteins, it binds directly to 16S rRNA where it helps nucleate assembly of the platform of the 30S subunit by binding and bridging several RNA helices of the 16S rRNA. In terms of biological role, forms an intersubunit bridge (bridge B4) with the 23S rRNA of the 50S subunit in the ribosome. The chain is Small ribosomal subunit protein uS15 from Deinococcus radiodurans (strain ATCC 13939 / DSM 20539 / JCM 16871 / CCUG 27074 / LMG 4051 / NBRC 15346 / NCIMB 9279 / VKM B-1422 / R1).